We begin with the raw amino-acid sequence, 189 residues long: MIDWSLNPRVNYAANMMRQGGVIAYPTEAVWGLGCNPFDEDAVADLLALKQRPVEKGVILIAANLQQIEPFIDHLDDLQRQRLKNTWPGPVTWLVPNNGLAPHWITGAFPSVALRVTDHPVAAGLCRAFGGPVVSTSCNPAGKPPARNIHEVRRYFGGQLDAVSSGLAGRRTNPSEIRDLLTGQVVRPS.

In terms of domain architecture, YrdC-like spans 7 to 189 (NPRVNYAANM…LLTGQVVRPS (183 aa)).

Belongs to the SUA5 family. TsaC subfamily.

Its subcellular location is the cytoplasm. It catalyses the reaction L-threonine + hydrogencarbonate + ATP = L-threonylcarbamoyladenylate + diphosphate + H2O. Its function is as follows. Required for the formation of a threonylcarbamoyl group on adenosine at position 37 (t(6)A37) in tRNAs that read codons beginning with adenine. Catalyzes the conversion of L-threonine, HCO(3)(-)/CO(2) and ATP to give threonylcarbamoyl-AMP (TC-AMP) as the acyladenylate intermediate, with the release of diphosphate. This Cellvibrio japonicus (strain Ueda107) (Pseudomonas fluorescens subsp. cellulosa) protein is Threonylcarbamoyl-AMP synthase.